The primary structure comprises 503 residues: Major facilitator superfamily domain-containing protein 4A (503 aa).

Helical transmembrane passes span 19-39 (LTYWSVFFSFGLCIAFLGPTL), 53-73 (ITWVFFAQQFCLLVGSTLGGV), 82-102 (LFLLFLSSLTISVVFVIIPFC), 105-125 (VGVLALVMAIAGLAMGCIDTI), 139-159 (AIFLQVLHFFVGFGALLSPLI), 214-234 (YAFWIMAAINLPVPVAVFYLI), 289-309 (IWNAPFTFFAIHMCAAVTLFM), 338-358 (GYLPSLFWAFITLGRLISIPV), 366-386 (SMLFINLIGVTATFLFLLLSQ), 392-412 (MFVGTALLGLWLSSVFPSMLA), 427-447 (VLVTGAGMGEMVLQILVGSVM), and 455-475 (FLVCGICLSSLAFTLYAVLLV). The tract at residues 484-503 (SEDSACKPPGLDGEATSYQS) is disordered.

It belongs to the major facilitator superfamily.

It localises to the membrane. The sequence is that of Major facilitator superfamily domain-containing protein 4A (mfsd4a) from Xenopus tropicalis (Western clawed frog).